A 449-amino-acid polypeptide reads, in one-letter code: Naphthalene 1,2-dioxygenase system, large oxygenase component (449 aa).

A Rieske domain is found at 39-137 (WLFLTHDSLI…LNKKCLGLKE (99 aa)). The [2Fe-2S] cluster site is built by cysteine 81, histidine 83, cysteine 101, and histidine 104. Fe cation-binding residues include histidine 208, histidine 213, and aspartate 362.

The protein belongs to the bacterial ring-hydroxylating dioxygenase alpha subunit family. As to quaternary structure, the naphthalene dioxygenase (NDO) multicomponent enzyme system is composed of an electron transfer component and a dioxygenase component (iron sulfur protein (ISP)). The electron transfer component is composed of a ferredoxin reductase (NdoR) and a ferredoxin (NdoA), and the dioxygenase component is formed of a heterohexamer (trimer of heterodimers) of three large alpha subunits (NdoB) and three small beta subunits (NdoC). [2Fe-2S] cluster serves as cofactor. It depends on Fe(2+) as a cofactor.

It catalyses the reaction naphthalene + NADH + O2 + H(+) = (1R,2S)-1,2-dihydronaphthalene-1,2-diol + NAD(+). It participates in aromatic compound metabolism; naphthalene degradation. In terms of biological role, component of the naphthalene dioxygenase (NDO) multicomponent enzyme system which catalyzes the incorporation of both atoms of molecular oxygen into naphthalene to form cis-(1R,2S)-dihydroxy-1,2-dihydronaphthalene. The alpha subunit has a catalytic role in the holoenzyme. This chain is Naphthalene 1,2-dioxygenase system, large oxygenase component, found in Pseudomonas fluorescens.